We begin with the raw amino-acid sequence, 417 residues long: MVAFKSDFLNTLQERGFIHQCSDFEGLDALASRNQVTAYTGYDCTAPSLHVGHLLSIMMMHWLQQTGNKPIALMGGGTTRVGDPSGRDETRKILSYDQIDANKESIKGTFLKFLVFGDGKNDAIMTDNAEWLTRLNYIEMLRDVGRHFSINRMLTMDSVKMRLEREQELSFIEFNYMILQSYDYVELARRHGCNLQMGGSDQWGNIVNGVDLGRRMGTHQLYALTCPLLTTSSGAKMGKTAAGAVWLNATMLPVYDYWQYWRNVEDADVGRFLKLFTILPMGEIAKLAALQGSEINEAKKVLATEATALLHGRDEAEKAADTARTTFEQGAISESLPTLDIPRSELASGAGVLALFVKAGLVASNGEARRQIKGGGLRVNDVAVADDKMVLTPDHLTPEGVIKLSMGKKRHVLLRPA.

L-tyrosine is bound at residue Tyr-39. A 'HIGH' region motif is present at residues 44 to 53 (CTAPSLHVGH). L-tyrosine is bound by residues Tyr-176 and Gln-180. A 'KMSKS' region motif is present at residues 236–240 (KMGKT). Lys-239 lines the ATP pocket. The 68-residue stretch at 350–417 (AGVLALFVKA…KKRHVLLRPA (68 aa)) folds into the S4 RNA-binding domain.

It belongs to the class-I aminoacyl-tRNA synthetase family. TyrS type 1 subfamily. As to quaternary structure, homodimer.

The protein resides in the cytoplasm. It carries out the reaction tRNA(Tyr) + L-tyrosine + ATP = L-tyrosyl-tRNA(Tyr) + AMP + diphosphate + H(+). Catalyzes the attachment of tyrosine to tRNA(Tyr) in a two-step reaction: tyrosine is first activated by ATP to form Tyr-AMP and then transferred to the acceptor end of tRNA(Tyr). This is Tyrosine--tRNA ligase from Nitrobacter winogradskyi (strain ATCC 25391 / DSM 10237 / CIP 104748 / NCIMB 11846 / Nb-255).